The primary structure comprises 198 residues: uncharacterized protein (198 aa).

The protein resides in the cytoplasm. This is an uncharacterized protein from Saccharomyces cerevisiae (strain ATCC 204508 / S288c) (Baker's yeast).